Here is a 211-residue protein sequence, read N- to C-terminus: Molybdenum cofactor guanylyltransferase (211 aa).

GTP-binding positions include 12-14, Lys-25, Asn-55, Asp-73, and Asp-103; that span reads LAG. Residue Asp-103 participates in Mg(2+) binding.

This sequence belongs to the MobA family. Monomer. Requires Mg(2+) as cofactor.

It is found in the cytoplasm. It catalyses the reaction Mo-molybdopterin + GTP + H(+) = Mo-molybdopterin guanine dinucleotide + diphosphate. Its function is as follows. Transfers a GMP moiety from GTP to Mo-molybdopterin (Mo-MPT) cofactor (Moco or molybdenum cofactor) to form Mo-molybdopterin guanine dinucleotide (Mo-MGD) cofactor. The polypeptide is Molybdenum cofactor guanylyltransferase (Albidiferax ferrireducens (strain ATCC BAA-621 / DSM 15236 / T118) (Rhodoferax ferrireducens)).